A 102-amino-acid polypeptide reads, in one-letter code: Nucleoid-associated protein WS1681 (102 aa).

Belongs to the YbaB/EbfC family. As to quaternary structure, homodimer.

The protein resides in the cytoplasm. Its subcellular location is the nucleoid. In terms of biological role, binds to DNA and alters its conformation. May be involved in regulation of gene expression, nucleoid organization and DNA protection. The polypeptide is Nucleoid-associated protein WS1681 (Wolinella succinogenes (strain ATCC 29543 / DSM 1740 / CCUG 13145 / JCM 31913 / LMG 7466 / NCTC 11488 / FDC 602W) (Vibrio succinogenes)).